Reading from the N-terminus, the 309-residue chain is Foldase protein PrsA (309 aa).

An N-terminal signal peptide occupies residues 1–20; it reads MKKKIVAGAVTLLSVAVLAA. C21 carries N-palmitoyl cysteine lipidation. Residue C21 is the site of S-diacylglycerol cysteine attachment. The 98-residue stretch at 144–241 folds into the PpiC domain; that stretch reads TPEVTAQIIK…ASYYIVKLVS (98 aa).

It belongs to the PrsA family.

It is found in the cell membrane. It carries out the reaction [protein]-peptidylproline (omega=180) = [protein]-peptidylproline (omega=0). In terms of biological role, plays a major role in protein secretion by helping the post-translocational extracellular folding of several secreted proteins. In Streptococcus gordonii (strain Challis / ATCC 35105 / BCRC 15272 / CH1 / DL1 / V288), this protein is Foldase protein PrsA.